Here is a 982-residue protein sequence, read N- to C-terminus: Glycine dehydrogenase (decarboxylating) (982 aa).

Lysine 729 is subject to N6-(pyridoxal phosphate)lysine.

This sequence belongs to the GcvP family. The glycine cleavage system is composed of four proteins: P, T, L and H. Pyridoxal 5'-phosphate serves as cofactor.

It carries out the reaction N(6)-[(R)-lipoyl]-L-lysyl-[glycine-cleavage complex H protein] + glycine + H(+) = N(6)-[(R)-S(8)-aminomethyldihydrolipoyl]-L-lysyl-[glycine-cleavage complex H protein] + CO2. Its function is as follows. The glycine cleavage system catalyzes the degradation of glycine. The P protein binds the alpha-amino group of glycine through its pyridoxal phosphate cofactor; CO(2) is released and the remaining methylamine moiety is then transferred to the lipoamide cofactor of the H protein. This is Glycine dehydrogenase (decarboxylating) from Ralstonia nicotianae (strain ATCC BAA-1114 / GMI1000) (Ralstonia solanacearum).